Consider the following 135-residue polypeptide: uncharacterized protein (135 aa).

A VOC domain is found at 4–129 (SIVHIALVVN…YGNLWDLLQL (126 aa)).

It to B.subtilis YwkD.

This is an uncharacterized protein from Shewanella frigidimarina (strain NCIMB 400).